We begin with the raw amino-acid sequence, 171 residues long: Co-chaperone protein HscB homolog (171 aa).

Residues 2-74 (NHFELFGLPS…ISRAEYILAE (73 aa)) form the J domain.

The protein belongs to the HscB family. Interacts with HscA and stimulates its ATPase activity.

Functionally, co-chaperone involved in the maturation of iron-sulfur cluster-containing proteins. Seems to help targeting proteins to be folded toward HscA. This chain is Co-chaperone protein HscB homolog, found in Vibrio campbellii (strain ATCC BAA-1116).